Here is a 421-residue protein sequence, read N- to C-terminus: Dihydroorotase (421 aa).

Residues His-60 and His-62 each contribute to the Zn(2+) site. Residues 62–64 and Asn-94 each bind substrate; that span reads HFR. The Zn(2+) site is built by Asp-151, His-178, and His-231. Asn-277 is a substrate binding site. Residue Asp-304 coordinates Zn(2+). The active site involves Asp-304. His-308 is a binding site for substrate.

Belongs to the metallo-dependent hydrolases superfamily. DHOase family. Class I DHOase subfamily. Zn(2+) is required as a cofactor.

The catalysed reaction is (S)-dihydroorotate + H2O = N-carbamoyl-L-aspartate + H(+). It functions in the pathway pyrimidine metabolism; UMP biosynthesis via de novo pathway; (S)-dihydroorotate from bicarbonate: step 3/3. Catalyzes the reversible cyclization of carbamoyl aspartate to dihydroorotate. The sequence is that of Dihydroorotase from Clostridioides difficile (strain 630) (Peptoclostridium difficile).